We begin with the raw amino-acid sequence, 493 residues long: Glutamyl-tRNA(Gln) amidotransferase subunit A (493 aa).

Catalysis depends on charge relay system residues K78 and S158. Catalysis depends on S182, which acts as the Acyl-ester intermediate.

Belongs to the amidase family. GatA subfamily. As to quaternary structure, heterotrimer of A, B and C subunits.

It carries out the reaction L-glutamyl-tRNA(Gln) + L-glutamine + ATP + H2O = L-glutaminyl-tRNA(Gln) + L-glutamate + ADP + phosphate + H(+). In terms of biological role, allows the formation of correctly charged Gln-tRNA(Gln) through the transamidation of misacylated Glu-tRNA(Gln) in organisms which lack glutaminyl-tRNA synthetase. The reaction takes place in the presence of glutamine and ATP through an activated gamma-phospho-Glu-tRNA(Gln). The chain is Glutamyl-tRNA(Gln) amidotransferase subunit A from Rickettsia bellii (strain RML369-C).